Here is a 529-residue protein sequence, read N- to C-terminus: uncharacterized protein (529 aa).

It to M.jannaschii MJ1451.

This is an uncharacterized protein from Methanothermobacter thermautotrophicus (strain ATCC 29096 / DSM 1053 / JCM 10044 / NBRC 100330 / Delta H) (Methanobacterium thermoautotrophicum).